A 697-amino-acid polypeptide reads, in one-letter code: Elongation factor G (697 aa).

The tr-type G domain occupies 6-281 (ENIRNIGICA…AVVDYLPSPI (276 aa)). GTP contacts are provided by residues 15–22 (AHIDAGKT), 79–83 (DTPGH), and 133–136 (NKMD).

It belongs to the TRAFAC class translation factor GTPase superfamily. Classic translation factor GTPase family. EF-G/EF-2 subfamily.

It localises to the cytoplasm. Functionally, catalyzes the GTP-dependent ribosomal translocation step during translation elongation. During this step, the ribosome changes from the pre-translocational (PRE) to the post-translocational (POST) state as the newly formed A-site-bound peptidyl-tRNA and P-site-bound deacylated tRNA move to the P and E sites, respectively. Catalyzes the coordinated movement of the two tRNA molecules, the mRNA and conformational changes in the ribosome. In Rickettsia bellii (strain OSU 85-389), this protein is Elongation factor G.